Consider the following 255-residue polypeptide: Uridylate kinase (255 aa).

A disordered region spans residues 1 to 21 (MSAAAAGRGERLNHAGNPGHR). Position 30–33 (30–33 (KLGG)) interacts with ATP. Residue Gly-71 participates in UMP binding. ATP contacts are provided by Gly-72 and Arg-76. Residues Asp-91 and 152–159 (MGLPYFST) each bind UMP. ATP contacts are provided by Phe-185 and Asp-188.

It belongs to the UMP kinase family. Homohexamer.

It localises to the cytoplasm. The catalysed reaction is UMP + ATP = UDP + ADP. It functions in the pathway pyrimidine metabolism; CTP biosynthesis via de novo pathway; UDP from UMP (UMPK route): step 1/1. Its activity is regulated as follows. Inhibited by UTP. Functionally, catalyzes the reversible phosphorylation of UMP to UDP. This is Uridylate kinase from Mycobacterium leprae (strain TN).